The primary structure comprises 359 residues: Guanine nucleotide-binding protein G(q) subunit alpha (359 aa).

S-palmitoyl cysteine attachment occurs at residues Cys9 and Cys10. The G-alpha domain maps to 38 to 359 (RELKLLLLGT…QLNLKEYNLV (322 aa)). Positions 41–54 (KLLLLGTGESGKST) are G1 motif. The GTP site is built by Ser50, Gly51, Lys52, Ser53, Thr54, Ser156, Leu180, Arg181, and Arg183. Residue Ser53 coordinates Mg(2+). The tract at residues 178–186 (DVLRVRVPT) is G2 motif. Mg(2+) is bound at residue Thr186. The G3 motif stretch occupies residues 201–210 (FRMVDVGGQR). Gln209 carries the 5-glutamyl histamine modification. The segment at 270 to 277 (ILFLNKKD) is G4 motif. GTP contacts are provided by Asn274, Lys275, Asp277, and Ala331. The interval 329 to 334 (TCATDT) is G5 motif.

Belongs to the G-alpha family. G(q) subfamily. In terms of assembly, g proteins are composed of 3 units; alpha, beta and gamma. The alpha chain contains the guanine nucleotide binding site. Interacts (GDP-bound form) with RIC8A (via C-terminus); promoting GNAQ folding and association with the plasma membrane. Binds NHERF1. Forms a complex with PECAM1 and BDKRB2. Interacts with GAS2L2. Post-translationally, palmitoylated by ZDHHC3 and ZDHHC7. Palmitoylation occurs in the Golgi and participates in the localization of GNAQ to the plasma membrane. In terms of processing, histaminylated at Gln-209 residues by TGM2.

The protein localises to the cell membrane. It is found in the golgi apparatus. Its subcellular location is the nucleus. It localises to the nucleus membrane. The catalysed reaction is GTP + H2O = GDP + phosphate + H(+). Guanine nucleotide-binding proteins (G proteins) function as transducers downstream of G protein-coupled receptors (GPCRs) in numerous signaling cascades. The alpha chain contains the guanine nucleotide binding site and alternates between an active, GTP-bound state and an inactive, GDP-bound state. Signaling by an activated GPCR promotes GDP release and GTP binding. The alpha subunit has a low GTPase activity that converts bound GTP to GDP, thereby terminating the signal. Both GDP release and GTP hydrolysis are modulated by numerous regulatory proteins. Signaling is mediated via phospholipase C-beta-dependent inositol lipid hydrolysis for signal propagation: activates phospholipase C-beta: following GPCR activation, GNAQ activates PLC-beta (PLCB1, PLCB2, PLCB3 or PLCB4), leading to production of diacylglycerol (DAG) and inositol 1,4,5-trisphosphate (IP3). Required for platelet activation. Regulates B-cell selection and survival and is required to prevent B-cell-dependent autoimmunity. Regulates chemotaxis of BM-derived neutrophils and dendritic cells (in vitro). Transduces FFAR4 signaling in response to long-chain fatty acids (LCFAs). Together with GNA11, required for heart development. The sequence is that of Guanine nucleotide-binding protein G(q) subunit alpha (GNAQ) from Canis lupus familiaris (Dog).